The chain runs to 699 residues: UV radiation resistance-associated gene protein (699 aa).

The segment covering methionine 1–proline 10 has biased composition (low complexity). The tract at residues methionine 1–proline 24 is disordered. In terms of domain architecture, C2 spans proline 23–asparagine 149. The interval histidine 200–glutamine 269 is sufficient for interaction with STX7; VTI1B AND STX8. The stretch at leucine 224–glutamate 305 forms a coiled coil. The segment at isoleucine 270–leucine 442 is sufficient for interaction with VPS16, required for interaction with CEP63. Residues glycine 443–lysine 699 are required for interaction with PRKDC, XRCC6 and XRCC5. The interval glycine 486–glycine 591 is disordered. Serine 493 bears the Phosphoserine mark. Serine 498 is modified (phosphoserine; by MTOR). Serine 508 is modified (phosphoserine). Threonine 518 carries the post-translational modification Phosphothreonine. At serine 522 the chain carries Phosphoserine. Over residues tyrosine 523 to proline 535 the composition is skewed to polar residues. Positions threonine 545 to aspartate 556 are enriched in low complexity. Phosphoserine occurs at positions 549 and 550. Over residues phenylalanine 557–aspartate 567 the composition is skewed to basic and acidic residues. A phosphoserine mark is found at serine 571, serine 582, and serine 689.

Component of the PI3K (PI3KC3/PI3K-III/class III phosphatidylinositol 3-kinase) complex II (PI3KC3-C2) in which the core composed of the catalytic subunit PIK3C3, the regulatory subunit PIK3R4 and BECN1 is associated with UVRAG; in the complex interacts directly with BECN1. PI3KC3-C2 can associate with further regulatory subunits such as RUBCN and probably SH3GLB1/Bif-1. Interacts with SH3GLB1; UVRAG bridges the interaction to BECN1 indicative for an association with the PI3K complex PI3KC3-C2. Interacts with RINT1. Associates with the NRZ complex under basal conditions and dissociates from it under autophagy conditions to associate with the PI3K complex; these complex associations seem to be mutually exclusive. Interacts with VPS16; VPS11; VPS18; VPS33 (VPS33A or VPS33B) and VPS39; indicative for an association with a class C Vps tethering complex (possibly the HOPS complex). Interacts with RAB7A; RAB7A competes with UVRAG for RUBCN binding. Interacts with STX7, VTI1B, STX8. Interacts with PRKDC, XRCC6 and XRCC5; indicative for an association with the DNA-dependent protein kinase complex DNA-PK. Interacts with CEP63. Directly interacts with FEZ1 and SCOC; the interaction with SCOC is reduced by amino acid starvation, but the complex is stabilized in the presence of FEZ1. Interacts with BECN1P1/BECN2. Interacts with SLAMF1. Interacts with RUBCNL/PACER; promoting targeting of UVRAG to autophagosome. Interacts with WNK1. In terms of processing, phosphorylated at Ser-498 by MTOR under basal conditions; increases the interaction with RUBCN implicated in inhibitory effect of RUBCN on PI3KC3 and decreases interaction with RAB7,A and VPS16 and VPS39 (indicative for a class C Vps complex, possibly the HOPS complex). Highly expressed in brain, lung, kidney and liver.

Its subcellular location is the late endosome. It is found in the lysosome. It localises to the cytoplasmic vesicle. The protein resides in the autophagosome. The protein localises to the early endosome. Its subcellular location is the endoplasmic reticulum. It is found in the midbody. It localises to the chromosome. The protein resides in the centromere. In terms of biological role, versatile protein that is involved in regulation of different cellular pathways implicated in membrane trafficking. Involved in regulation of the COPI-dependent retrograde transport from Golgi and the endoplasmic reticulum by associating with the NRZ complex; the function is dependent on its binding to phosphatidylinositol 3-phosphate (PtdIns(3)P). During autophagy acts as a regulatory subunit of the alternative PI3K complex II (PI3KC3-C2) that mediates formation of phosphatidylinositol 3-phosphate and is believed to be involved in maturation of autophagosomes and endocytosis. Activates lipid kinase activity of PIK3C3. Involved in the regulation of degradative endocytic trafficking and cytokinesis, and in regulation of ATG9A transport from the Golgi to the autophagosome; the functions seems to implicate its association with PI3KC3-C2. Involved in maturation of autophagosomes and degradative endocytic trafficking independently of BECN1 but depending on its association with a class C Vps complex (possibly the HOPS complex); the association is also proposed to promote autophagosome recruitment and activation of Rab7 and endosome-endosome fusion events. Enhances class C Vps complex (possibly HOPS complex) association with a SNARE complex and promotes fusogenic SNARE complex formation during late endocytic membrane fusion. In case of negative-strand RNA virus infection is required for efficient virus entry, promotes endocytic transport of virions and is implicated in a VAMP8-specific fusogenic SNARE complex assembly. Functionally, involved in maintaining chromosomal stability. Promotes DNA double-strand break (DSB) repair by association with DNA-dependent protein kinase complex DNA-PK and activating it in non-homologous end joining (NHEJ). Required for centrosome stability and proper chromosome segregation. This Homo sapiens (Human) protein is UV radiation resistance-associated gene protein (UVRAG).